Reading from the N-terminus, the 360-residue chain is Mannose-1-phosphate guanylyltransferase catalytic subunit beta (360 aa).

Residues 2-222 are substrate-binding domain; sequence KALILVGGYG…QGFWMDIGQP (221 aa). GDP-alpha-D-mannose is bound at residue aspartate 110. Aspartate 110 contributes to the Mg(2+) binding site. Lysine 162 is an active-site residue. Aspartate 218 is a binding site for GDP-alpha-D-mannose. A hexapeptide repeat domain region spans residues 245–360; that stretch reads YSGPGIVGNV…ESVPEPRIIM (116 aa).

The protein belongs to the transferase hexapeptide repeat family. As to quaternary structure, component of the GMPPA-GMPPB mannose-1-phosphate guanylyltransferase complex composed of 4 GMPPA subunits and 8 GMPPB subunits; the complex is organized into three layers, a central layer made up of 2 GMPPA dimers sandwiched between two layers each made up of 2 GMPPB dimers. GMPPB catalytic activity is reduced when part of the complex and binding of GDP-alpha-D-Mannose by GMPPA induces allosteric feedback inhibition of GMPPB. Mg(2+) serves as cofactor.

It localises to the cytoplasm. It carries out the reaction alpha-D-mannose 1-phosphate + GTP + H(+) = GDP-alpha-D-mannose + diphosphate. It functions in the pathway nucleotide-sugar biosynthesis; GDP-alpha-D-mannose biosynthesis; GDP-alpha-D-mannose from alpha-D-mannose 1-phosphate (GTP route): step 1/1. With respect to regulation, enzyme activity is reduced by incorporation into the GMPPA-GMPPB mannose-1-phosphate guanylyltransferase complex. Allosterically inhibited, when part of the GMPPA-GMPPB complex, by GDP-alpha-D-mannose binding to GMPPA. Functionally, catalytic subunit of the GMPPA-GMPPB mannose-1-phosphate guanylyltransferase complex. Catalyzes the formation of GDP-mannose, an essential precursor of glycan moieties of glycoproteins and glycolipids. Can catalyze the reverse reaction in vitro. Together with GMPPA regulates GDP-alpha-D-mannose levels. In Mus musculus (Mouse), this protein is Mannose-1-phosphate guanylyltransferase catalytic subunit beta.